Reading from the N-terminus, the 39-residue chain is Gas vesicle protein C (39 aa).

The protein belongs to the gas vesicle GvpC family.

It is found in the gas vesicle. Its function is as follows. Confers stability, involved in shaping gas vesicles, hollow, gas filled proteinaceous nanostructures. During planktonic growth they allow positioning of the organism at a favorable depth for light or nutrient acquisition. In Spirulina sp. (strain CCAP 1475/10), this protein is Gas vesicle protein C.